The chain runs to 520 residues: Glucose-6-phosphate isomerase (520 aa).

The active-site Proton donor is the Glu-327. Residues His-358 and Lys-486 contribute to the active site.

This sequence belongs to the GPI family.

Its subcellular location is the cytoplasm. The enzyme catalyses alpha-D-glucose 6-phosphate = beta-D-fructose 6-phosphate. The protein operates within carbohydrate biosynthesis; gluconeogenesis. Its pathway is carbohydrate degradation; glycolysis; D-glyceraldehyde 3-phosphate and glycerone phosphate from D-glucose: step 2/4. Catalyzes the reversible isomerization of glucose-6-phosphate to fructose-6-phosphate. In Bordetella avium (strain 197N), this protein is Glucose-6-phosphate isomerase.